We begin with the raw amino-acid sequence, 294 residues long: 4-hydroxy-tetrahydrodipicolinate synthase (294 aa).

T45 provides a ligand contact to pyruvate. Y133 serves as the catalytic Proton donor/acceptor. Catalysis depends on K162, which acts as the Schiff-base intermediate with substrate. I204 is a pyruvate binding site.

This sequence belongs to the DapA family. As to quaternary structure, homotetramer; dimer of dimers.

It localises to the cytoplasm. It catalyses the reaction L-aspartate 4-semialdehyde + pyruvate = (2S,4S)-4-hydroxy-2,3,4,5-tetrahydrodipicolinate + H2O + H(+). Its pathway is amino-acid biosynthesis; L-lysine biosynthesis via DAP pathway; (S)-tetrahydrodipicolinate from L-aspartate: step 3/4. Catalyzes the condensation of (S)-aspartate-beta-semialdehyde [(S)-ASA] and pyruvate to 4-hydroxy-tetrahydrodipicolinate (HTPA). This is 4-hydroxy-tetrahydrodipicolinate synthase from Bartonella quintana (strain Toulouse) (Rochalimaea quintana).